A 151-amino-acid chain; its full sequence is Ribonuclease H (151 aa).

In terms of domain architecture, RNase H type-1 spans 1 to 146; that stretch reads MPDLYAYTDG…ADELARAGMA (146 aa). Mg(2+)-binding residues include D9, E52, D74, and D138.

This sequence belongs to the RNase H family. As to quaternary structure, monomer. The cofactor is Mg(2+).

It localises to the cytoplasm. The enzyme catalyses Endonucleolytic cleavage to 5'-phosphomonoester.. In terms of biological role, endonuclease that specifically degrades the RNA of RNA-DNA hybrids. This chain is Ribonuclease H, found in Cereibacter sphaeroides (strain ATCC 17029 / ATH 2.4.9) (Rhodobacter sphaeroides).